A 188-amino-acid polypeptide reads, in one-letter code: Peptidyl-tRNA hydrolase (188 aa).

Residue Tyr-16 participates in tRNA binding. His-21 functions as the Proton acceptor in the catalytic mechanism. The tRNA site is built by Phe-66, Asn-68, and Asn-114.

It belongs to the PTH family. In terms of assembly, monomer.

It is found in the cytoplasm. The catalysed reaction is an N-acyl-L-alpha-aminoacyl-tRNA + H2O = an N-acyl-L-amino acid + a tRNA + H(+). Functionally, hydrolyzes ribosome-free peptidyl-tRNAs (with 1 or more amino acids incorporated), which drop off the ribosome during protein synthesis, or as a result of ribosome stalling. Catalyzes the release of premature peptidyl moieties from peptidyl-tRNA molecules trapped in stalled 50S ribosomal subunits, and thus maintains levels of free tRNAs and 50S ribosomes. The sequence is that of Peptidyl-tRNA hydrolase from Geobacter sp. (strain M21).